Here is a 589-residue protein sequence, read N- to C-terminus: TAF5-like RNA polymerase II p300/CBP-associated factor-associated factor 65 kDa subunit 5L (589 aa).

WD repeat units lie at residues 266 to 305 (NTEQLLNTAEISSDSKLLAAGFDNSCIKLWSLRSKKLKSE), 340 to 379 (GHCGPVYSTRFLADSSGLLSCSEDMSIRYWDLGSFTNTVL), 382 to 421 (GHAYPVWDVDISPFSLYFASGSHDRTARLWSFDRTYPLRI), 424 to 463 (GHLADVDCVKFHPNSNYLATGSTDKTVRLWSAQQGNSVRL), 466 to 505 (GHRGPVLSLSFSPNGKYLASAGEDQRLKLWDLASGTLFKE), and 508 to 547 (GHTDSITSLAFSPDSGLIASASMDNSVRVWDIRSTCCNTP).

The protein belongs to the WD repeat TAF5 family. As to quaternary structure, the PCAF complex is composed of a number of TBP-associated factors (TAFS), such as TAF5, TAF5L, TAF6, TAF6L, TAF9, TAF10 and TAF12, PCAF, and also PCAF-associated factors (PAFs), such as TADA2L/ADA2, TADA3L/ADA3 and SPT3. Component of the STAGA transcription coactivator-HAT complex, at least composed of SUPT3H, GCN5L2, TAF5L, TAF6L, SUPT7L, TADA3L, TAD1L, TAF10, TAF12, TRRAP and TAF9.

The protein localises to the nucleus. Functionally, functions as a component of the PCAF complex. The PCAF complex is capable of efficiently acetylating histones in a nucleosomal context. The PCAF complex could be considered as the human version of the yeast SAGA complex. With TAF6L, acts as an epigenetic regulator essential for somatic reprogramming. Regulates target genes through H3K9ac deposition and MYC recruitment which trigger MYC regulatory network to orchestrate gene expression programs to control embryonic stem cell state. This is TAF5-like RNA polymerase II p300/CBP-associated factor-associated factor 65 kDa subunit 5L from Mus musculus (Mouse).